The sequence spans 280 residues: Eukaryotic translation initiation factor 3 subunit F-1 (280 aa).

Residues 8-138 (VRVHPVVLFQ…LRSYVCIQLG (131 aa)) enclose the MPN domain.

Belongs to the eIF-3 subunit F family. As to quaternary structure, component of the eukaryotic translation initiation factor 3 (eIF-3) complex. The eIF-3 complex interacts with pix.

Its subcellular location is the cytoplasm. Component of the eukaryotic translation initiation factor 3 (eIF-3) complex, which is involved in protein synthesis of a specialized repertoire of mRNAs and, together with other initiation factors, stimulates binding of mRNA and methionyl-tRNAi to the 40S ribosome. The eIF-3 complex specifically targets and initiates translation of a subset of mRNAs involved in cell proliferation. The chain is Eukaryotic translation initiation factor 3 subunit F-1 from Drosophila persimilis (Fruit fly).